A 210-amino-acid polypeptide reads, in one-letter code: Pyridoxine/pyridoxamine 5'-phosphate oxidase (210 aa).

Substrate contacts are provided by residues 7–10 (RQSY) and K65. FMN contacts are provided by residues 60–65 (RIVLIK), 75–76 (FT), R81, K82, and Q104. 3 residues coordinate substrate: Y122, R126, and S130. FMN-binding positions include 139-140 (QS) and W182. 188–190 (RLH) contacts substrate. R192 is a binding site for FMN.

This sequence belongs to the pyridoxamine 5'-phosphate oxidase family. As to quaternary structure, homodimer. FMN is required as a cofactor.

It catalyses the reaction pyridoxamine 5'-phosphate + O2 + H2O = pyridoxal 5'-phosphate + H2O2 + NH4(+). The catalysed reaction is pyridoxine 5'-phosphate + O2 = pyridoxal 5'-phosphate + H2O2. Its pathway is cofactor metabolism; pyridoxal 5'-phosphate salvage; pyridoxal 5'-phosphate from pyridoxamine 5'-phosphate: step 1/1. It functions in the pathway cofactor metabolism; pyridoxal 5'-phosphate salvage; pyridoxal 5'-phosphate from pyridoxine 5'-phosphate: step 1/1. Catalyzes the oxidation of either pyridoxine 5'-phosphate (PNP) or pyridoxamine 5'-phosphate (PMP) into pyridoxal 5'-phosphate (PLP). This is Pyridoxine/pyridoxamine 5'-phosphate oxidase from Bordetella avium (strain 197N).